The chain runs to 699 residues: Long-chain-fatty-acid--CoA ligase 1 (699 aa).

Position 1 is an N-acetylmethionine (methionine 1). Tyrosine 9 bears the 3'-nitrotyrosine mark. The chain crosses the membrane as a helical; Signal-anchor for type III membrane protein span at residues 25-45; the sequence is LPTNTLMGFGAFAALTTFWYA. Residues 46–699 lie on the Cytoplasmic side of the membrane; that stretch reads TRPKALKPPC…IDELYATIKI (654 aa). The residue at position 85 (tyrosine 85) is a Phosphotyrosine. Tyrosine 86 is modified (3'-nitrotyrosine). O-linked (GlcNAc) serine glycosylation is present at serine 136. N6-acetyllysine occurs at positions 208, 357, and 387. Serine 621 carries the post-translational modification Phosphoserine. Lysine 633 is modified (N6-acetyllysine).

Belongs to the ATP-dependent AMP-binding enzyme family. Requires Mg(2+) as cofactor.

Its subcellular location is the mitochondrion outer membrane. It is found in the peroxisome membrane. The protein resides in the microsome membrane. The protein localises to the endoplasmic reticulum membrane. The enzyme catalyses a long-chain fatty acid + ATP + CoA = a long-chain fatty acyl-CoA + AMP + diphosphate. The catalysed reaction is (5Z,8Z,11Z,14Z)-eicosatetraenoate + ATP + CoA = (5Z,8Z,11Z,14Z)-eicosatetraenoyl-CoA + AMP + diphosphate. It carries out the reaction 3,7,11,15-tetramethylhexadecanoate + ATP + CoA = phytanoyl-CoA + AMP + diphosphate. It catalyses the reaction hexadecanoate + ATP + CoA = hexadecanoyl-CoA + AMP + diphosphate. The enzyme catalyses (E)-hexadec-2-enoate + ATP + CoA = (2E)-hexadecenoyl-CoA + AMP + diphosphate. The catalysed reaction is 2,6,10,14-tetramethylpentadecanoate + ATP + CoA = pristanoyl-CoA + AMP + diphosphate. It carries out the reaction 14,15-epoxy-(5Z,8Z,11Z)-eicosatrienoate + ATP + CoA = 14,15-epoxy-(5Z,8Z,11Z)-eicosatrienoyl-CoA + AMP + diphosphate. It catalyses the reaction 5-hydroxy-(6E,8Z,11Z,14Z)-eicosatetraenoate + ATP + CoA = 5-hydroxy-(6E,8Z,11Z,14Z)-eicosatetraenoyl-CoA + AMP + diphosphate. The enzyme catalyses 12-hydroxy-(5Z,8Z,10E,14Z)-eicosatetraenoate + ATP + CoA = 12-hydroxy-(5Z,8Z,10E,14Z)-eicosatetraenoyl-CoA + AMP + diphosphate. The catalysed reaction is 15-hydroxy-(5Z,8Z,11Z,13E)-eicosatetraenoate + ATP + CoA = 15-hydroxy-(5Z,8Z,11Z,13E)-eicosatetraenoyl-CoA + AMP + diphosphate. It carries out the reaction (9Z)-octadecenoate + ATP + CoA = (9Z)-octadecenoyl-CoA + AMP + diphosphate. Inhibited at high temperature and by arachidonate. Functionally, catalyzes the conversion of long-chain fatty acids to their active form acyl-CoAs for both synthesis of cellular lipids, and degradation via beta-oxidation. Preferentially uses palmitoleate, oleate and linoleate. Preferentially activates arachidonate than epoxyeicosatrienoic acids (EETs) or hydroxyeicosatrienoic acids (HETEs). The chain is Long-chain-fatty-acid--CoA ligase 1 from Mus musculus (Mouse).